A 536-amino-acid polypeptide reads, in one-letter code: Adenine deaminase (536 aa).

Residues 1–24 (MTPSPHDLLHCGMNSQDRDETNGD) are disordered.

The protein belongs to the metallo-dependent hydrolases superfamily. Adenine deaminase family. Requires Mn(2+) as cofactor.

It catalyses the reaction adenine + H2O + H(+) = hypoxanthine + NH4(+). In Deinococcus radiodurans (strain ATCC 13939 / DSM 20539 / JCM 16871 / CCUG 27074 / LMG 4051 / NBRC 15346 / NCIMB 9279 / VKM B-1422 / R1), this protein is Adenine deaminase.